The chain runs to 496 residues: Glycerol kinase (496 aa).

ADP is bound at residue Thr12. Residues Thr12, Thr13, and Ser14 each coordinate ATP. Residue Thr12 coordinates sn-glycerol 3-phosphate. An ADP-binding site is contributed by Arg16. Arg82, Glu83, and Tyr134 together coordinate sn-glycerol 3-phosphate. Glycerol contacts are provided by Arg82, Glu83, and Tyr134. His230 carries the phosphohistidine; by HPr modification. Residue Asp244 participates in sn-glycerol 3-phosphate binding. Residues Asp244 and Gln245 each contribute to the glycerol site. Thr266 and Gly309 together coordinate ADP. Residues Thr266, Gly309, Gln313, and Gly410 each contribute to the ATP site. ADP-binding residues include Gly410 and Asn414.

This sequence belongs to the FGGY kinase family. In terms of assembly, homotetramer and homodimer (in equilibrium). In terms of processing, the phosphoenolpyruvate-dependent sugar phosphotransferase system (PTS), including enzyme I, and histidine-containing protein (HPr) are required for the phosphorylation, which leads to the activation of the enzyme.

The catalysed reaction is glycerol + ATP = sn-glycerol 3-phosphate + ADP + H(+). The protein operates within polyol metabolism; glycerol degradation via glycerol kinase pathway; sn-glycerol 3-phosphate from glycerol: step 1/1. With respect to regulation, activated by phosphorylation and inhibited by fructose 1,6-bisphosphate (FBP). In terms of biological role, key enzyme in the regulation of glycerol uptake and metabolism. Catalyzes the phosphorylation of glycerol to yield sn-glycerol 3-phosphate. This Bacillus subtilis (strain 168) protein is Glycerol kinase.